The following is a 563-amino-acid chain: Light-independent protochlorophyllide reductase subunit B (563 aa).

Position 36 (Asp-36) interacts with [4Fe-4S] cluster. The Proton donor role is filled by Asp-293. Residue 437 to 438 participates in substrate binding; that stretch reads GM. Residues 459-478 form a disordered region; it reads ERREAEFGNQKVETGEPGTG.

It belongs to the ChlB/BchB/BchZ family. Protochlorophyllide reductase is composed of three subunits; BchL, BchN and BchB. Forms a heterotetramer of two BchB and two BchN subunits. [4Fe-4S] cluster is required as a cofactor.

The enzyme catalyses chlorophyllide a + oxidized 2[4Fe-4S]-[ferredoxin] + 2 ADP + 2 phosphate = protochlorophyllide a + reduced 2[4Fe-4S]-[ferredoxin] + 2 ATP + 2 H2O. The protein operates within porphyrin-containing compound metabolism; bacteriochlorophyll biosynthesis (light-independent). In terms of biological role, component of the dark-operative protochlorophyllide reductase (DPOR) that uses Mg-ATP and reduced ferredoxin to reduce ring D of protochlorophyllide (Pchlide) to form chlorophyllide a (Chlide). This reaction is light-independent. The NB-protein (BchN-BchB) is the catalytic component of the complex. The chain is Light-independent protochlorophyllide reductase subunit B from Roseiflexus castenholzii (strain DSM 13941 / HLO8).